Reading from the N-terminus, the 556-residue chain is MSNSDKNNNNNTNNNNNNNNNNNGNFGIWEEPDDDSTNENEELFNNLITKTTKFIDDDEEEEEEESSWDTLYAKHVETSNTTQPFNNSNSNNNNFQTQPTNISTLNPNNNNSNNSSSGSSSSRGVRTPRGTRSNSPPQPSKNETVQKESSGDISEGFTLIDSPNDNNDNKNNNKNNNNDSNIVDDDEDEEEFPTLSKKNQKRKPKKSTSSPSSTSSPIVSPQTQTSKLESSMDVSPSSGKQSWSELLKNVADEDINNNNNNNNNNNSNQYHQEEENYYDSDDYDSSPFAIINNSSTTTNNNNNNNNNTTTTTTTTTTTNSSSLPIVNSQSFEEGEEITSDIKIGIKPKTVTVPFQSTLSLRARTKQIKKVQQQQQQSSKSKPNNNNNKFVDNNPYAVLEEEERALQSAIKASLLLNSPVDLDSKQQNVSQQKQQQEQQPTTTTNSVSSSKSKSVATTDKNRTTSTAVAPTTSSNKKANKSNKTSTANTTATTTTTASSKKNKSNSNKSSNVSNTTTTTSTTENSASEGSFIKNAVIFIFILLLMVVGFKYTQTLNQ.

Disordered stretches follow at residues 1-40, 80-243, 278-324, 363-391, and 422-525; these read MSNS…TNEN, NTTQ…KQSW, YDSD…SSLP, RTKQ…KFVD, and DSKQ…ENSA. The span at 7 to 25 shows a compositional bias: low complexity; sequence NNNNNTNNNNNNNNNNNGN. A compositionally biased stretch (acidic residues) spans 30–40; sequence EEPDDDSTNEN. 2 stretches are compositionally biased toward low complexity: residues 80 to 133 and 164 to 181; these read NTTQ…GTRS and NDNN…NDSN. Acidic residues predominate over residues 182-192; it reads IVDDDEDEEEF. The segment covering 207-226 has biased composition (low complexity); it reads STSSPSSTSSPIVSPQTQTS. A compositionally biased stretch (polar residues) spans 227–243; the sequence is KLESSMDVSPSSGKQSW. 3 stretches are compositionally biased toward low complexity: residues 292-322, 369-388, and 425-525; these read NNSS…NSSS, KVQQ…NNNK, and QQNV…ENSA. The chain crosses the membrane as a helical span at residues 528 to 548; it reads GSFIKNAVIFIFILLLMVVGF.

It is found in the membrane. This is an uncharacterized protein from Dictyostelium discoideum (Social amoeba).